We begin with the raw amino-acid sequence, 309 residues long: Mitochondrial import receptor subunit TOM34 (309 aa).

Phosphoserine is present on Ser-8. TPR repeat units lie at residues 9-42 (VEQLRAAGNQNFRNGQYGEASALYERALRLLQAR), 51-84 (SVLYSNRAACYLKDGNCTDCIKDCTSALALVPFS), and 86-118 (KPLLRRASAYEALEKYSLAYVDYKTVLQIDNSV). Positions 158–187 (WSSLPSENHKETAKSKSKETTATKNRVPSA) are disordered. Ser-160 carries the post-translational modification Phosphoserine. Over residues 164 to 178 (ENHKETAKSKSKETT) the composition is skewed to basic and acidic residues. Ser-186 carries the phosphoserine modification. TPR repeat units lie at residues 193–226 (ARVLKEEGNELVKKGNHKKAIEKYSESLLFSSLE), 227–260 (SATYSNRALCHLVLKQYKEAEKDCTEALKLDGKN), and 262–294 (KAFYRRAQAYKALKDYKSSLADISSLLQIEPRN). Lys-197 is covalently cross-linked (Glycyl lysine isopeptide (Lys-Gly) (interchain with G-Cter in SUMO2)).

The protein belongs to the Tom34 family. In terms of assembly, interacts with HSP90A, VCP, ATP6V1D, KIAA0665, AMPK, and DMAP1 through its TPR repeat.

The protein resides in the cytoplasm. It localises to the mitochondrion outer membrane. In terms of biological role, plays a role in the import of cytosolically synthesized preproteins into mitochondria. Binds the mature portion of precursor proteins. Interacts with cellular components, and possesses weak ATPase activity. May be a chaperone-like protein that helps to keep newly synthesized precursors in an unfolded import compatible state. The sequence is that of Mitochondrial import receptor subunit TOM34 (Tomm34) from Rattus norvegicus (Rat).